The primary structure comprises 210 residues: Cytidylate kinase (210 aa).

Residue 7-15 (GPAASGKGT) participates in ATP binding.

Belongs to the cytidylate kinase family. Type 1 subfamily.

Its subcellular location is the cytoplasm. The catalysed reaction is CMP + ATP = CDP + ADP. It carries out the reaction dCMP + ATP = dCDP + ADP. This is Cytidylate kinase from Methylobacterium sp. (strain 4-46).